We begin with the raw amino-acid sequence, 901 residues long: Protein translocase subunit SecA (901 aa).

ATP is bound by residues Gln-89, 107 to 111, and Asp-502; that span reads GEGKT. Residues 838 to 883 are disordered; sequence YQQQQAETEAQMHPEHEEAEGGEVSGRVAGFDETDPTTWGNPSRND. The Zn(2+) site is built by Cys-885, Cys-887, Cys-896, and His-897.

The protein belongs to the SecA family. Monomer and homodimer. Part of the essential Sec protein translocation apparatus which comprises SecA, SecYEG and auxiliary proteins SecDF-YajC and YidC. Zn(2+) is required as a cofactor.

It localises to the cell inner membrane. The protein localises to the cytoplasm. It carries out the reaction ATP + H2O + cellular proteinSide 1 = ADP + phosphate + cellular proteinSide 2.. In terms of biological role, part of the Sec protein translocase complex. Interacts with the SecYEG preprotein conducting channel. Has a central role in coupling the hydrolysis of ATP to the transfer of proteins into and across the cell membrane, serving both as a receptor for the preprotein-SecB complex and as an ATP-driven molecular motor driving the stepwise translocation of polypeptide chains across the membrane. The protein is Protein translocase subunit SecA of Paracoccus denitrificans (strain Pd 1222).